We begin with the raw amino-acid sequence, 134 residues long: 6,7-dimethyl-8-ribityllumazine synthase (134 aa).

Residues Phe-12, 44–46 (VFD), and 68–70 (SVI) contribute to the 5-amino-6-(D-ribitylamino)uracil site. 73 to 74 (ET) provides a ligand contact to (2S)-2-hydroxy-3-oxobutyl phosphate. The active-site Proton donor is His-76. 5-amino-6-(D-ribitylamino)uracil is bound at residue Leu-101. A (2S)-2-hydroxy-3-oxobutyl phosphate-binding site is contributed by Arg-116.

Belongs to the DMRL synthase family.

It catalyses the reaction (2S)-2-hydroxy-3-oxobutyl phosphate + 5-amino-6-(D-ribitylamino)uracil = 6,7-dimethyl-8-(1-D-ribityl)lumazine + phosphate + 2 H2O + H(+). The protein operates within cofactor biosynthesis; riboflavin biosynthesis; riboflavin from 2-hydroxy-3-oxobutyl phosphate and 5-amino-6-(D-ribitylamino)uracil: step 1/2. Functionally, catalyzes the formation of 6,7-dimethyl-8-ribityllumazine by condensation of 5-amino-6-(D-ribitylamino)uracil with 3,4-dihydroxy-2-butanone 4-phosphate. This is the penultimate step in the biosynthesis of riboflavin. This is 6,7-dimethyl-8-ribityllumazine synthase from Methanosarcina acetivorans (strain ATCC 35395 / DSM 2834 / JCM 12185 / C2A).